Consider the following 216-residue polypeptide: Cytochrome c biogenesis ATP-binding export protein CcmA (216 aa).

Residues 5–216 (ISVDTLLSAS…RKIRLDYRFV (212 aa)) form the ABC transporter domain. 43–50 (GPNGAGKT) lines the ATP pocket.

Belongs to the ABC transporter superfamily. CcmA exporter (TC 3.A.1.107) family. In terms of assembly, the complex is composed of two ATP-binding proteins (CcmA) and two transmembrane proteins (CcmB).

The protein localises to the cell inner membrane. The enzyme catalyses heme b(in) + ATP + H2O = heme b(out) + ADP + phosphate + H(+). In terms of biological role, part of the ABC transporter complex CcmAB involved in the biogenesis of c-type cytochromes; once thought to export heme, this seems not to be the case, but its exact role is uncertain. Responsible for energy coupling to the transport system. This chain is Cytochrome c biogenesis ATP-binding export protein CcmA, found in Shewanella oneidensis (strain ATCC 700550 / JCM 31522 / CIP 106686 / LMG 19005 / NCIMB 14063 / MR-1).